The primary structure comprises 87 residues: Small ribosomal subunit protein uS15c (87 aa).

Belongs to the universal ribosomal protein uS15 family. As to quaternary structure, part of the 30S ribosomal subunit.

The protein localises to the plastid. The protein resides in the chloroplast. This Oenothera glazioviana (Large-flowered evening primrose) protein is Small ribosomal subunit protein uS15c (rps15).